The sequence spans 133 residues: Snaclec botrocetin subunit alpha (133 aa).

Cystine bridges form between Cys-2–Cys-13, Cys-30–Cys-128, and Cys-103–Cys-120. The C-type lectin domain maps to 9-129; it reads YEGNCYKFFQ…CAQKNPFVCK (121 aa).

The protein belongs to the snaclec family. Heterodimer of subunits alpha and beta; disulfide-linked. Botrocetin and vWF form a soluble complex. Expressed by the venom gland.

Its subcellular location is the secreted. In terms of biological role, snaclec that binds to von Willebrand factor (VWF) and induces its interaction with GPIbalpha (GP1BA) (via the vWF A1 domain), resulting in platelet aggregation. The protein is Snaclec botrocetin subunit alpha of Bothrops jararaca (Jararaca).